A 102-amino-acid chain; its full sequence is Small ribosomal subunit protein uS10 (102 aa).

The protein belongs to the universal ribosomal protein uS10 family. In terms of assembly, part of the 30S ribosomal subunit.

Its function is as follows. Involved in the binding of tRNA to the ribosomes. This is Small ribosomal subunit protein uS10 from Enterococcus faecalis (strain ATCC 700802 / V583).